A 317-amino-acid chain; its full sequence is Nitrilase (317 aa).

The CN hydrolase domain maps to 5 to 280 (VKVAVVQAEP…DGVIISELDM (276 aa)). Residue Glu-45 is the Proton acceptor of the active site. Residue Lys-125 is part of the active site. Cys-165 acts as the Nucleophile in catalysis.

The protein belongs to the carbon-nitrogen hydrolase superfamily. Nitrilase family.

The enzyme catalyses a nitrile + 2 H2O = a carboxylate + NH4(+). Functionally, nitrilase that hydrolyzes preferentially 4-cyanopyridine. Is also able to hydrolyze some aliphatic nitriles, such as phenylacetonitrile. This is Nitrilase from Meyerozyma guilliermondii (strain ATCC 6260 / CBS 566 / DSM 6381 / JCM 1539 / NBRC 10279 / NRRL Y-324) (Yeast).